The following is a 262-amino-acid chain: Ribosomal RNA small subunit methyltransferase A (262 aa).

S-adenosyl-L-methionine contacts are provided by His-16, Leu-18, Gly-43, Glu-64, Asp-89, and Asn-109.

It belongs to the class I-like SAM-binding methyltransferase superfamily. rRNA adenine N(6)-methyltransferase family. RsmA subfamily.

It is found in the cytoplasm. It carries out the reaction adenosine(1518)/adenosine(1519) in 16S rRNA + 4 S-adenosyl-L-methionine = N(6)-dimethyladenosine(1518)/N(6)-dimethyladenosine(1519) in 16S rRNA + 4 S-adenosyl-L-homocysteine + 4 H(+). Functionally, specifically dimethylates two adjacent adenosines (A1518 and A1519) in the loop of a conserved hairpin near the 3'-end of 16S rRNA in the 30S particle. May play a critical role in biogenesis of 30S subunits. This is Ribosomal RNA small subunit methyltransferase A from Xanthomonas axonopodis pv. citri (strain 306).